The following is a 29-amino-acid chain: GILDSLKNLAKNAGQILLNKASCKLSGQC.

Residues Cys23 and Cys29 are joined by a disulfide bond.

The protein belongs to the frog skin active peptide (FSAP) family. Brevinin subfamily. Expressed by the skin glands.

Its subcellular location is the secreted. In terms of biological role, shows antibacterial activity against representative Gram-negative and Gram-positive bacterial species, and hemolytic activity. The sequence is that of Brevinin-2Ed from Pelophylax lessonae (Pool frog).